We begin with the raw amino-acid sequence, 176 residues long: Inner membrane-spanning protein YciB (176 aa).

5 helical membrane-spanning segments follow: residues 24–44, 49–69, 76–96, 119–139, and 149–169; these read TATA…AFRH, PMLW…LVLH, WKPT…QLAF, LNVV…FVAY, and FKLF…SLWL.

It belongs to the YciB family.

It localises to the cell inner membrane. In terms of biological role, plays a role in cell envelope biogenesis, maintenance of cell envelope integrity and membrane homeostasis. The chain is Inner membrane-spanning protein YciB from Paraburkholderia xenovorans (strain LB400).